The following is a 767-amino-acid chain: Photosystem I P700 chlorophyll a apoprotein A1 (767 aa).

The interval 1–22 is disordered; it reads MTISPPESGEKNKKVLEDPVKA. A compositionally biased stretch (basic and acidic residues) spans 8-22; sequence SGEKNKKVLEDPVKA. A run of 8 helical transmembrane segments spans residues 76 to 99, 162 to 185, 201 to 225, 309 to 327, 368 to 391, 407 to 433, 455 to 477, and 558 to 576; these read IFSA…FHGA, LMAL…FHYH, LNHH…HIGA, VSHH…GHMY, RHAQ…HHMY, LGLF…IAMV, ALIS…LYIH, and LMIH…LILL. Positions 600 and 609 each coordinate [4Fe-4S] cluster. Helical transmembrane passes span 616–637 and 681–703; these read HVFL…HFSW and ISMY…MFLF. Residue H692 participates in divinylchlorophyll a' binding. The divinyl chlorophyll a site is built by M700 and Y708. W709 contacts phylloquinone. Residues 741-761 form a helical membrane-spanning segment; that stretch reads AVGVTHFLVGGIATTWAFFHA.

Belongs to the PsaA/PsaB family. The PsaA/B heterodimer binds the P700 divinyl chlorophyll special pair and subsequent electron acceptors. PSI consists of a core antenna complex that captures photons, and an electron transfer chain that converts photonic excitation into a charge separation. The cyanobacterial PSI reaction center is composed of one copy each of PsaA,B,C,D,E,F,I,J,K,L,M and X, and forms trimeric complexes. PSI electron transfer chain: 5 divinyl chlorophyll a, 1 divinyl chlorophyll a', 2 phylloquinones and 3 4Fe-4S clusters. PSI core antenna: 90 divinyl chlorophyll a, 22 carotenoids, 3 phospholipids and 1 galactolipid. P700 is a divinyl chlorophyll a/divinyl chlorophyll a' dimer, A0 is one or more divinyl chlorophyll a, A1 is one or both phylloquinones and FX is a shared 4Fe-4S iron-sulfur center. is required as a cofactor.

The protein resides in the cellular thylakoid membrane. It carries out the reaction reduced [plastocyanin] + hnu + oxidized [2Fe-2S]-[ferredoxin] = oxidized [plastocyanin] + reduced [2Fe-2S]-[ferredoxin]. Its function is as follows. PsaA and PsaB bind P700, the primary electron donor of photosystem I (PSI), as well as the electron acceptors A0, A1 and FX. PSI is a plastocyanin/cytochrome c6-ferredoxin oxidoreductase, converting photonic excitation into a charge separation, which transfers an electron from the donor P700 chlorophyll pair to the spectroscopically characterized acceptors A0, A1, FX, FA and FB in turn. Oxidized P700 is reduced on the lumenal side of the thylakoid membrane by plastocyanin or cytochrome c6. This is Photosystem I P700 chlorophyll a apoprotein A1 from Prochlorococcus marinus (strain MIT 9301).